Consider the following 137-residue polypeptide: NADH-quinone oxidoreductase subunit A (137 aa).

A run of 3 helical transmembrane segments spans residues 12-32 (WGFA…LGLS), 66-86 (FYLV…LFAW), and 95-115 (WTGF…LVYL).

Belongs to the complex I subunit 3 family. NDH-1 is composed of 13 different subunits. Subunits NuoA, H, J, K, L, M, N constitute the membrane sector of the complex.

The protein localises to the cell inner membrane. The catalysed reaction is a quinone + NADH + 5 H(+)(in) = a quinol + NAD(+) + 4 H(+)(out). Its function is as follows. NDH-1 shuttles electrons from NADH, via FMN and iron-sulfur (Fe-S) centers, to quinones in the respiratory chain. The immediate electron acceptor for the enzyme in this species is believed to be ubiquinone. Couples the redox reaction to proton translocation (for every two electrons transferred, four hydrogen ions are translocated across the cytoplasmic membrane), and thus conserves the redox energy in a proton gradient. The chain is NADH-quinone oxidoreductase subunit A from Pseudomonas putida (strain ATCC 700007 / DSM 6899 / JCM 31910 / BCRC 17059 / LMG 24140 / F1).